A 55-amino-acid polypeptide reads, in one-letter code: Large ribosomal subunit protein bL33 (55 aa).

It belongs to the bacterial ribosomal protein bL33 family.

This chain is Large ribosomal subunit protein bL33, found in Wigglesworthia glossinidia brevipalpis.